The chain runs to 282 residues: Cyanocobalamin reductase / alkylcobalamin dealkylase (282 aa).

Residues aspartate 104, 115–118 (ILAQ), 129–131 (YYQ), cysteine 149, and isoleucine 160 contribute to the substrate site. The disordered stretch occupies residues 234-282 (LGLAQPSEKPSSPSPDLPFTTPAPKKPGNPSRARSWLSPRVSPPASPGP). Phosphoserine occurs at positions 245, 247, 275, and 279.

Belongs to the MMACHC family. In terms of assembly, monomer in the absence of bound substrate. Homodimer; dimerization is triggered by binding to FMN or adenosylcobalamin. Interacts with LMBRD1 and ABCD4; the interaction ensures the transport of cobalamin from the lysosome to the cytoplasm. Forms a multiprotein complex with MMADHC, MTR and MTRR; the interaction with MTR could modulate MMACHC-dependent processing of cobalamin. Heterodimer with MMADHC; the interaction might play a role in the regulation of the balance between AdoCbl and MeCbl synthesis. FAD is required as a cofactor. It depends on FMN as a cofactor. As to expression, widely expressed. Expressed at higher level in fetal liver. Also expressed in spleen, lymph node, thymus and bone marrow. Weakly or not expressed in peripheral blood leukocytes.

It is found in the cytoplasm. Its subcellular location is the cytosol. It carries out the reaction 2 cob(II)alamin-[cyanocobalamin reductase] + 2 hydrogen cyanide + NADP(+) = 2 cyanocob(III)alamin + 2 apo-[cyanocobalamin reductase] + NADPH + H(+). The catalysed reaction is apo-[alkylcobalamin reductase] + an R-cob(III)alamin + glutathione = cob(I)alamin-[alkylcobalamin reductase] + an S-substituted glutathione + H(+). The enzyme catalyses apo-[alkylcobalamin reductase] + methylcob(III)alamin + glutathione = S-methyl glutathione + cob(I)alamin-[alkylcobalamin reductase] + H(+). It catalyses the reaction apo-[alkylcobalamin reductase] + adenosylcob(III)alamin + glutathione = S-adenosylglutathione + cob(I)alamin-[alkylcobalamin reductase] + H(+). Its function is as follows. Cobalamin (vitamin B12) cytosolic chaperone that catalyzes the reductive decyanation of cyanocob(III)alamin (cyanocobalamin, CNCbl) to yield cob(II)alamin and cyanide, using FAD or FMN as cofactors and NADPH as cosubstrate. Cyanocobalamin constitutes the inactive form of vitamin B12 introduced from the diet, and is converted into the active cofactors methylcobalamin (MeCbl) involved in methionine biosynthesis, and 5'-deoxyadenosylcobalamin (AdoCbl) involved in the TCA cycle. Forms a complex with the lysosomal transporter ABCD4 and its chaperone LMBRD1, to transport cobalamin across the lysosomal membrane into the cytosol. The processing of cobalamin in the cytosol occurs in a multiprotein complex composed of at least MMACHC, MMADHC, MTRR (methionine synthase reductase) and MTR (methionine synthase) which may contribute to shuttle safely and efficiently cobalamin towards MTR in order to produce methionine. Also acts as a glutathione transferase by catalyzing the dealkylation of the alkylcob(III)alamins MeCbl and AdoCbl, using the thiolate of glutathione for nucleophilic displacement to generate cob(I)alamin and the corresponding glutathione thioether. The conversion of incoming MeCbl or AdoCbl into a common intermediate cob(I)alamin is necessary to meet the cellular needs for both cofactors. Cysteine and homocysteine cannot substitute for glutathione in this reaction. In Homo sapiens (Human), this protein is Cyanocobalamin reductase / alkylcobalamin dealkylase.